The sequence spans 70 residues: Small ribosomal subunit protein bS21 (70 aa).

The protein belongs to the bacterial ribosomal protein bS21 family.

This chain is Small ribosomal subunit protein bS21, found in Helicobacter acinonychis (strain Sheeba).